The sequence spans 1394 residues: DNA-directed RNA polymerase subunit beta' (1394 aa).

The Zn(2+) site is built by Cys70, Cys72, Cys85, and Cys88. Asp470, Asp472, and Asp474 together coordinate Mg(2+). Cys815, Cys889, Cys896, and Cys899 together coordinate Zn(2+).

This sequence belongs to the RNA polymerase beta' chain family. As to quaternary structure, the RNAP catalytic core consists of 2 alpha, 1 beta, 1 beta' and 1 omega subunit. When a sigma factor is associated with the core the holoenzyme is formed, which can initiate transcription. It depends on Mg(2+) as a cofactor. The cofactor is Zn(2+).

It catalyses the reaction RNA(n) + a ribonucleoside 5'-triphosphate = RNA(n+1) + diphosphate. In terms of biological role, DNA-dependent RNA polymerase catalyzes the transcription of DNA into RNA using the four ribonucleoside triphosphates as substrates. The protein is DNA-directed RNA polymerase subunit beta' of Anaeromyxobacter sp. (strain K).